The chain runs to 468 residues: Meiotically up-regulated gene 111 protein (468 aa).

The next 12 membrane-spanning stretches (helical) occupy residues 13–33 (LVLI…NSVT), 59–79 (IVSA…VPFY), 92–112 (VFTT…SILY), 116–136 (FPTC…ISGT), 158–178 (IVVL…LGSI), 190–210 (LISW…AVFF), 285–305 (PIPI…FFDI), 330–350 (FGSL…GFSV), 356–376 (TMLI…FATA), 382–402 (LALF…LVAA), 417–437 (ALLE…AFIV), and 446–466 (FFIG…LLLG).

The protein resides in the membrane. Has a role in meiosis. The chain is Meiotically up-regulated gene 111 protein (mug111) from Schizosaccharomyces pombe (strain 972 / ATCC 24843) (Fission yeast).